A 234-amino-acid chain; its full sequence is Exotoxin type G (234 aa).

The signal sequence occupies residues 1-24 (MKTNILTIIILSCVFSYGSQLAYA).

This sequence belongs to the staphylococcal/streptococcal toxin family.

Mitogenic for human peripheral blood lymphocytes. The chain is Exotoxin type G (speG) from Streptococcus pyogenes serotype M1.